We begin with the raw amino-acid sequence, 154 residues long: Prefoldin subunit 5 (154 aa).

Ala-2 is subject to N-acetylalanine. An N6-acetyllysine modification is found at Lys-42. A Phosphoserine modification is found at Ser-56.

This sequence belongs to the prefoldin subunit alpha family. Heterohexamer of two PFD-alpha type and four PFD-beta type subunits.

The protein localises to the nucleus. In terms of biological role, binds specifically to cytosolic chaperonin (c-CPN) and transfers target proteins to it. Binds to nascent polypeptide chain and promotes folding in an environment in which there are many competing pathways for nonnative proteins. Represses the transcriptional activity of MYC. The sequence is that of Prefoldin subunit 5 (PFDN5) from Pongo abelii (Sumatran orangutan).